The chain runs to 334 residues: Glycerol-3-phosphate dehydrogenase [NAD(P)+] (334 aa).

The NADPH site is built by tryptophan 13, arginine 33, and lysine 106. Lysine 106, glycine 137, and serine 139 together coordinate sn-glycerol 3-phosphate. Alanine 141 contributes to the NADPH binding site. The sn-glycerol 3-phosphate site is built by lysine 192, aspartate 245, serine 255, arginine 256, and asparagine 257. Catalysis depends on lysine 192, which acts as the Proton acceptor. Arginine 256 serves as a coordination point for NADPH. NADPH contacts are provided by valine 280 and glutamate 282.

This sequence belongs to the NAD-dependent glycerol-3-phosphate dehydrogenase family.

The protein resides in the cytoplasm. The enzyme catalyses sn-glycerol 3-phosphate + NAD(+) = dihydroxyacetone phosphate + NADH + H(+). It catalyses the reaction sn-glycerol 3-phosphate + NADP(+) = dihydroxyacetone phosphate + NADPH + H(+). It participates in membrane lipid metabolism; glycerophospholipid metabolism. In terms of biological role, catalyzes the reduction of the glycolytic intermediate dihydroxyacetone phosphate (DHAP) to sn-glycerol 3-phosphate (G3P), the key precursor for phospholipid synthesis. The sequence is that of Glycerol-3-phosphate dehydrogenase [NAD(P)+] from Chlamydia pneumoniae (Chlamydophila pneumoniae).